The sequence spans 209 residues: V-type ATP synthase subunit D (209 aa).

It belongs to the V-ATPase D subunit family.

In terms of biological role, produces ATP from ADP in the presence of a proton gradient across the membrane. This Thermoanaerobacter pseudethanolicus (strain ATCC 33223 / 39E) (Clostridium thermohydrosulfuricum) protein is V-type ATP synthase subunit D.